A 498-amino-acid chain; its full sequence is ATP synthase subunit beta, chloroplastic (498 aa).

Position 172–179 (172–179 (GGAGVGKT)) interacts with ATP.

The protein belongs to the ATPase alpha/beta chains family. F-type ATPases have 2 components, CF(1) - the catalytic core - and CF(0) - the membrane proton channel. CF(1) has five subunits: alpha(3), beta(3), gamma(1), delta(1), epsilon(1). CF(0) has four main subunits: a(1), b(1), b'(1) and c(9-12).

Its subcellular location is the plastid. It localises to the chloroplast thylakoid membrane. It catalyses the reaction ATP + H2O + 4 H(+)(in) = ADP + phosphate + 5 H(+)(out). Its function is as follows. Produces ATP from ADP in the presence of a proton gradient across the membrane. The catalytic sites are hosted primarily by the beta subunits. The protein is ATP synthase subunit beta, chloroplastic of Calycanthus floridus var. glaucus (Eastern sweetshrub).